The primary structure comprises 130 residues: Large ribosomal subunit protein bL17 (130 aa).

The protein belongs to the bacterial ribosomal protein bL17 family. As to quaternary structure, part of the 50S ribosomal subunit. Contacts protein L32.

This chain is Large ribosomal subunit protein bL17, found in Nitrosomonas europaea (strain ATCC 19718 / CIP 103999 / KCTC 2705 / NBRC 14298).